The sequence spans 470 residues: Protein naked cuticle homolog 1 (470 aa).

Disordered regions lie at residues 1-21 (MGKLHSKPAAVCKRRESPEGD) and 90-114 (PPEKTDGLGSGDEKKMERVSEPCPG). Gly2 is lipidated: N-myristoyl glycine. Basic and acidic residues predominate over residues 92–109 (EKTDGLGSGDEKKMERVS). The tract at residues 125–190 (QCDVSMEEDS…LRVKLTVAPD (66 aa)) is interaction with DVL1, DVL2 and DVL3. Positions 131 to 166 (EEDSRQEWTFTLYDFDNNGKVTREDITSLLHTIYEV) constitute an EF-hand domain. Ca(2+) contacts are provided by Asp144, Asp146, Asn148, Lys150, and Asp155. Polar residues predominate over residues 192–205 (SQSKRSVLVNQADL). 4 disordered regions span residues 192–228 (SQSKRSVLVNQADLQSARPRAETKPTEDLRSWEKKQR), 271–314 (QFGP…QGVD), 337–357 (GTQDGSKHFVRSPKAQGKSVG), and 446–470 (GQPVQRHEHHHHHEHHHHYHHFYQT). Residues 210–227 (PRAETKPTEDLRSWEKKQ) show a composition bias toward basic and acidic residues. Residues 271 to 281 (QFGPGSPSVAQ) show a composition bias toward polar residues. A compositionally biased stretch (basic residues) spans 452 to 470 (HEHHHHHEHHHHYHHFYQT).

It belongs to the NKD family. Interacts with DVL1, DVL2, DVL3 and PPP2R3A. Expressed in colon, heart, kidney, leukocyte, liver, lung, ovary, pancreas, placenta, prostate, skeletal muscle, small intestine and spleen.

It localises to the cell membrane. The protein resides in the cytoplasm. Cell autonomous antagonist of the canonical Wnt signaling pathway. May activate a second Wnt signaling pathway that controls planar cell polarity. In Homo sapiens (Human), this protein is Protein naked cuticle homolog 1 (NKD1).